The primary structure comprises 168 residues: tRNA-splicing endonuclease subunit Sen15 (168 aa).

Residues 1–32 form a disordered region; it reads MEERSDSEPTPGCSGPGPAPVRDGGGAHTWAP. Phosphoserine occurs at positions 7 and 165.

Belongs to the SEN15 family. As to quaternary structure, homodimer. tRNA splicing endonuclease is a heterotetramer composed of TSEN2, TSEN15, TSEN34/LENG5 and TSEN54. tRNA splicing endonuclease complex also contains proteins of the pre-mRNA 3' end processing machinery such as CLP1, CPSF1, CPSF4 and CSTF2.

Its subcellular location is the nucleus. The protein localises to the nucleolus. Non-catalytic subunit of the tRNA-splicing endonuclease complex, a complex responsible for identification and cleavage of the splice sites in pre-tRNA. It cleaves pre-tRNA at the 5' and 3' splice sites to release the intron. The products are an intron and two tRNA half-molecules bearing 2',3' cyclic phosphate and 5'-OH termini. There are no conserved sequences at the splice sites, but the intron is invariably located at the same site in the gene, placing the splice sites an invariant distance from the constant structural features of the tRNA body. The tRNA splicing endonuclease is also involved in mRNA processing via its association with pre-mRNA 3'-end processing factors, establishing a link between pre-tRNA splicing and pre-mRNA 3'-end formation, suggesting that the endonuclease subunits function in multiple RNA-processing events. This chain is tRNA-splicing endonuclease subunit Sen15 (Tsen15), found in Mus musculus (Mouse).